The sequence spans 491 residues: FAD-dependent monooxygenase cle3 (491 aa).

Positions 55, 69, 128, 330, and 343 each coordinate FAD. A glycan (N-linked (GlcNAc...) asparagine) is linked at Asn-380. A helical membrane pass occupies residues 462 to 482 (STVVWTSLGILGLVVFLFLLF).

It belongs to the paxM FAD-dependent monooxygenase family. It depends on FAD as a cofactor.

It is found in the membrane. It participates in secondary metabolite biosynthesis; terpenoid biosynthesis. In terms of biological role, FAD-dependent monooxygenase; part of the cluster A that mediates the biosynthesis of chevalone E and its oxidized derivatives that possess a unique five-membered lactone ring and can synergistically enhance the cytotoxicity of doxorubicin (DOX) in breast cancer cells. Within the pathway, cle3 takes part to the biosynthesis of the molecular scaffold by catalyzing the formation of an (S)-epoxide ring at the terminal olefin of the geranylgeranyl group. The molecular scaffold is commonly biosynthesized by a series of enzymes including the non-reducing polyketide synthase (NR-PKS) cle1 that produces the alpha-pyrone triacetic acid lactone (TAL); The membrane-bound prenyltransferase cle5 that accepts TAL as its substrate to perform a C-3 geranylgeranylation reaction, in which the pathway-dedicated GGPS cle6 is required to provide GGPP, the other substrate of cle5; the FAD-dependent monooxygenase Cle3 that forms an (S)-epoxide ring at the terminal olefin of the geranylgeranyl group; and the terpene cyclase Cle7 that catalyzes the cyclization of the prenyl group that yields the pentacyclic pathway intermediate chevalone E. Chevalone E can derivatize into seven new oxidized analogs by the cytochrome P450 monooxygenases cle2 (acting at C-20) and cle4 (acting at C-11 and C-12). The polypeptide is FAD-dependent monooxygenase cle3 (Aspergillus versicolor).